Here is a 148-residue protein sequence, read N- to C-terminus: Large ribosomal subunit protein uL15 (148 aa).

The segment at 1 to 47 (MTKLEDLRPTPGSVKPRKRVGRGIGSGHGKTSGRGHKGQKSRGSGKV) is disordered. Residues 31-45 (TSGRGHKGQKSRGSG) show a composition bias toward basic residues.

Belongs to the universal ribosomal protein uL15 family. In terms of assembly, part of the 50S ribosomal subunit.

In terms of biological role, binds to the 23S rRNA. This is Large ribosomal subunit protein uL15 from Pseudothermotoga lettingae (strain ATCC BAA-301 / DSM 14385 / NBRC 107922 / TMO) (Thermotoga lettingae).